Consider the following 540-residue polypeptide: Chaperonin GroEL (540 aa).

ATP is bound by residues 30-33 (TLGP), 87-91 (DGTTT), Gly414, 479-481 (NAL), and Asp495.

The protein belongs to the chaperonin (HSP60) family. Forms a cylinder of 14 subunits composed of two heptameric rings stacked back-to-back. Interacts with the co-chaperonin GroES.

It is found in the cytoplasm. It catalyses the reaction ATP + H2O + a folded polypeptide = ADP + phosphate + an unfolded polypeptide.. Its function is as follows. Together with its co-chaperonin GroES, plays an essential role in assisting protein folding. The GroEL-GroES system forms a nano-cage that allows encapsulation of the non-native substrate proteins and provides a physical environment optimized to promote and accelerate protein folding. The polypeptide is Chaperonin GroEL (Carboxydothermus hydrogenoformans (strain ATCC BAA-161 / DSM 6008 / Z-2901)).